The following is a 527-amino-acid chain: Eukaryotic translation initiation factor 4B1 (527 aa).

Disordered stretches follow at residues 1-370 (MAKP…REVV) and 453-527 (FGQR…RQGW). 2 stretches are compositionally biased toward low complexity: residues 35-45 (AAAGGAASFPS) and 74-85 (GAAGAPRRVAPA). Composition is skewed to basic and acidic residues over residues 102–155 (PRER…DNWG) and 181–194 (RSDDIDNWSRDKKP). The Nuclear localization signal signature appears at 196 to 203 (PSRYPSLG). Over residues 203 to 232 (GTGGGFRESSGGGFRESSGGGFRESSGGGF) the composition is skewed to gly residues. Over residues 293-317 (KPREEVLAEKGLDWRKMEGEIEKKT) the composition is skewed to basic and acidic residues. The span at 319–336 (RPTSSHSSRPNSAHSSRP) shows a compositional bias: low complexity. Composition is skewed to basic and acidic residues over residues 472-485 (EEPHVAVAHMDRPR) and 496-510 (PVEERWGFHGSRERG). Over residues 518 to 527 (SDRSSTRQGW) the composition is skewed to low complexity.

Belongs to the eIF-4 subunit B family. In terms of assembly, homodimer. Nonspherical monomer. mRNA-discriminating component of initiation complexes. Phosphorylated.

It localises to the nucleus. In terms of biological role, promotes the eIF4F and eIF4A RNA-dependent ATP-hydrolysis activity with different efficiency depending on mRNAs, thus providing mRNA discrimination during initiation of translation. The protein is Eukaryotic translation initiation factor 4B1 of Triticum aestivum (Wheat).